The primary structure comprises 213 residues: Small ribosomal subunit protein uS5 (213 aa).

The interval 1 to 41 is disordered; it reads MSGRERNGGRSAENNDKKERNERNGRNDRGGRNDRRNQQDE. The region spanning 45 to 108 is the S5 DRBM domain; sequence FIERVVTINR…EEARKNFFRV (64 aa).

This sequence belongs to the universal ribosomal protein uS5 family. In terms of assembly, part of the 30S ribosomal subunit. Contacts proteins S4 and S8.

With S4 and S12 plays an important role in translational accuracy. In terms of biological role, located at the back of the 30S subunit body where it stabilizes the conformation of the head with respect to the body. The chain is Small ribosomal subunit protein uS5 from Corynebacterium jeikeium (strain K411).